Reading from the N-terminus, the 337-residue chain is Holliday junction branch migration complex subunit RuvB (337 aa).

Positions 1–20 are disordered; sequence MQTRFVSPVNHDEEQDEPSV. Residues 1–181 are large ATPase domain (RuvB-L); that stretch reads MQTRFVSPVN…FGIILRLDLY (181 aa). Residues arginine 21, glycine 62, lysine 65, threonine 66, threonine 67, 128–130, arginine 171, tyrosine 181, and arginine 218 each bind ATP; that span reads EDY. Threonine 66 is a binding site for Mg(2+). Residues 182–252 are small ATPAse domain (RuvB-S); the sequence is DPSELTVIVT…IANTALFALG (71 aa). The segment at 255 to 337 is head domain (RuvB-H); the sequence is QKGLDILDRR…SHTRDLTSFL (83 aa). Residues arginine 310 and arginine 315 each contribute to the DNA site.

Belongs to the RuvB family. Homohexamer. Forms an RuvA(8)-RuvB(12)-Holliday junction (HJ) complex. HJ DNA is sandwiched between 2 RuvA tetramers; dsDNA enters through RuvA and exits via RuvB. An RuvB hexamer assembles on each DNA strand where it exits the tetramer. Each RuvB hexamer is contacted by two RuvA subunits (via domain III) on 2 adjacent RuvB subunits; this complex drives branch migration. In the full resolvosome a probable DNA-RuvA(4)-RuvB(12)-RuvC(2) complex forms which resolves the HJ.

It is found in the cytoplasm. The catalysed reaction is ATP + H2O = ADP + phosphate + H(+). In terms of biological role, the RuvA-RuvB-RuvC complex processes Holliday junction (HJ) DNA during genetic recombination and DNA repair, while the RuvA-RuvB complex plays an important role in the rescue of blocked DNA replication forks via replication fork reversal (RFR). RuvA specifically binds to HJ cruciform DNA, conferring on it an open structure. The RuvB hexamer acts as an ATP-dependent pump, pulling dsDNA into and through the RuvAB complex. RuvB forms 2 homohexamers on either side of HJ DNA bound by 1 or 2 RuvA tetramers; 4 subunits per hexamer contact DNA at a time. Coordinated motions by a converter formed by DNA-disengaged RuvB subunits stimulates ATP hydrolysis and nucleotide exchange. Immobilization of the converter enables RuvB to convert the ATP-contained energy into a lever motion, pulling 2 nucleotides of DNA out of the RuvA tetramer per ATP hydrolyzed, thus driving DNA branch migration. The RuvB motors rotate together with the DNA substrate, which together with the progressing nucleotide cycle form the mechanistic basis for DNA recombination by continuous HJ branch migration. Branch migration allows RuvC to scan DNA until it finds its consensus sequence, where it cleaves and resolves cruciform DNA. The polypeptide is Holliday junction branch migration complex subunit RuvB (Methanospirillum hungatei JF-1 (strain ATCC 27890 / DSM 864 / NBRC 100397 / JF-1)).